The sequence spans 70 residues: Large ribosomal subunit protein bL31 (70 aa).

C16, C18, C38, and C41 together coordinate Zn(2+).

This sequence belongs to the bacterial ribosomal protein bL31 family. Type A subfamily. In terms of assembly, part of the 50S ribosomal subunit. The cofactor is Zn(2+).

Functionally, binds the 23S rRNA. This chain is Large ribosomal subunit protein bL31, found in Saccharopolyspora erythraea (strain ATCC 11635 / DSM 40517 / JCM 4748 / NBRC 13426 / NCIMB 8594 / NRRL 2338).